Reading from the N-terminus, the 678-residue chain is DNA mismatch repair protein MutL (678 aa).

The protein belongs to the DNA mismatch repair MutL/HexB family.

Its function is as follows. This protein is involved in the repair of mismatches in DNA. It is required for dam-dependent methyl-directed DNA mismatch repair. May act as a 'molecular matchmaker', a protein that promotes the formation of a stable complex between two or more DNA-binding proteins in an ATP-dependent manner without itself being part of a final effector complex. This is DNA mismatch repair protein MutL from Lactiplantibacillus plantarum (strain ATCC BAA-793 / NCIMB 8826 / WCFS1) (Lactobacillus plantarum).